Consider the following 150-residue polypeptide: Endoribonuclease YbeY (150 aa).

His-113, His-117, and His-123 together coordinate Zn(2+).

It belongs to the endoribonuclease YbeY family. It depends on Zn(2+) as a cofactor.

Its subcellular location is the cytoplasm. Its function is as follows. Single strand-specific metallo-endoribonuclease involved in late-stage 70S ribosome quality control and in maturation of the 3' terminus of the 16S rRNA. The protein is Endoribonuclease YbeY of Syntrophotalea carbinolica (strain DSM 2380 / NBRC 103641 / GraBd1) (Pelobacter carbinolicus).